Reading from the N-terminus, the 825-residue chain is KH domain-containing protein YLL032C (825 aa).

The 75-residue stretch at 482-556 (PAEESFFIPE…ANICLAKNDL (75 aa)) folds into the KH domain. Over residues 727–740 (SSKSNTSNSNTNGN) the composition is skewed to low complexity. Residues 727 to 766 (SSKSNTSNSNTNGNFRSMNNAKSRTTIDNTSQSGASPQRH) form a disordered region. Positions 741 to 762 (FRSMNNAKSRTTIDNTSQSGAS) are enriched in polar residues. Serine 762 is modified (phosphoserine).

The protein localises to the cytoplasm. This chain is KH domain-containing protein YLL032C, found in Saccharomyces cerevisiae (strain ATCC 204508 / S288c) (Baker's yeast).